The primary structure comprises 352 residues: MPRLLIAASGTGGHIYPALSFADSLSNSWEIVWLGVPNRLEVELVPEKYNLIKLKVGGLQGNIFRKLFDLCKLLFASVQVSVLLRQKKINVIFTTGGYISAPCILGAKMAGIPVLLHESNAIPGKVTRLLGRFCDHVALGIPSASEYLQRCRTSFTGTPVRTEFLFEKSLPSWVPLGEGVLIVVMGGSQGAIKMNEMVRKILPCLIEKGCRVVHLTGKNDCFYRNRDQEKSHPNLVVRDFSDEMPALLRNADLAISRSGAGAICELMVTKTPSILIPFPSSTDQHQELNAAYMARFGGAIIVNQHDPEKNILKNIVSNLLDSNSLREMKLNMNNHDYSYPEKKIFEIIHSIS.

Residues 11–13 (TGG), asparagine 120, arginine 161, serine 188, and glutamine 286 contribute to the UDP-N-acetyl-alpha-D-glucosamine site.

Belongs to the glycosyltransferase 28 family. MurG subfamily.

The protein resides in the cell inner membrane. It carries out the reaction di-trans,octa-cis-undecaprenyl diphospho-N-acetyl-alpha-D-muramoyl-L-alanyl-D-glutamyl-meso-2,6-diaminopimeloyl-D-alanyl-D-alanine + UDP-N-acetyl-alpha-D-glucosamine = di-trans,octa-cis-undecaprenyl diphospho-[N-acetyl-alpha-D-glucosaminyl-(1-&gt;4)]-N-acetyl-alpha-D-muramoyl-L-alanyl-D-glutamyl-meso-2,6-diaminopimeloyl-D-alanyl-D-alanine + UDP + H(+). It participates in cell wall biogenesis; peptidoglycan biosynthesis. Its function is as follows. Cell wall formation. Catalyzes the transfer of a GlcNAc subunit on undecaprenyl-pyrophosphoryl-MurNAc-pentapeptide (lipid intermediate I) to form undecaprenyl-pyrophosphoryl-MurNAc-(pentapeptide)GlcNAc (lipid intermediate II). This chain is UDP-N-acetylglucosamine--N-acetylmuramyl-(pentapeptide) pyrophosphoryl-undecaprenol N-acetylglucosamine transferase, found in Prochlorococcus marinus (strain NATL1A).